Reading from the N-terminus, the 578-residue chain is Transmembrane protein 121B (578 aa).

2 disordered regions span residues 1-84 (MRPA…ESLS) and 106-129 (AGPA…PTSS). Composition is skewed to low complexity over residues 8–17 (PRSVSSASGS) and 44–53 (GDSSTSTSTS). Residues 54–67 (RGGGGGRRGGGGGS) are compositionally biased toward gly residues. Residue Ser167 is modified to Phosphoserine. Residues 529–557 (RARGGYGAPPSAPPPPPPPPQGGSQLGHC) form a disordered region. The span at 538-549 (PSAPPPPPPPPQ) shows a compositional bias: pro residues. The residue at position 552 (Ser552) is a Phosphoserine.

It belongs to the TMEM121 family. As to expression, widely expressed, especially in adult heart, brain, prostate, testes, peripherical blood leukocytes and fetal brain.

In Homo sapiens (Human), this protein is Transmembrane protein 121B.